The chain runs to 448 residues: Glutamyl-tRNA reductase (448 aa).

Substrate-binding positions include 49 to 52 (TCNR), Ser-109, 114 to 116 (ETQ), and Gln-120. The active-site Nucleophile is the Cys-50. Position 189 to 194 (189 to 194 (GAGEMS)) interacts with NADP(+).

It belongs to the glutamyl-tRNA reductase family. As to quaternary structure, homodimer.

It carries out the reaction (S)-4-amino-5-oxopentanoate + tRNA(Glu) + NADP(+) = L-glutamyl-tRNA(Glu) + NADPH + H(+). Its pathway is porphyrin-containing compound metabolism; protoporphyrin-IX biosynthesis; 5-aminolevulinate from L-glutamyl-tRNA(Glu): step 1/2. Its function is as follows. Catalyzes the NADPH-dependent reduction of glutamyl-tRNA(Glu) to glutamate 1-semialdehyde (GSA). In Staphylococcus haemolyticus (strain JCSC1435), this protein is Glutamyl-tRNA reductase.